Consider the following 239-residue polypeptide: 2-C-methyl-D-erythritol 4-phosphate cytidylyltransferase (239 aa).

The protein belongs to the IspD/TarI cytidylyltransferase family. IspD subfamily.

The enzyme catalyses 2-C-methyl-D-erythritol 4-phosphate + CTP + H(+) = 4-CDP-2-C-methyl-D-erythritol + diphosphate. It functions in the pathway isoprenoid biosynthesis; isopentenyl diphosphate biosynthesis via DXP pathway; isopentenyl diphosphate from 1-deoxy-D-xylulose 5-phosphate: step 2/6. Catalyzes the formation of 4-diphosphocytidyl-2-C-methyl-D-erythritol from CTP and 2-C-methyl-D-erythritol 4-phosphate (MEP). In Acinetobacter baylyi (strain ATCC 33305 / BD413 / ADP1), this protein is 2-C-methyl-D-erythritol 4-phosphate cytidylyltransferase.